Reading from the N-terminus, the 293-residue chain is Acetyl-coenzyme A carboxylase carboxyl transferase subunit beta (293 aa).

The 265-residue stretch at 29 to 293 (LWVKCSECSQ…GVKELAEANI (265 aa)) folds into the CoA carboxyltransferase N-terminal domain. Residues C33, C36, C52, and C55 each coordinate Zn(2+). The C4-type zinc finger occupies 33-55 (CSECSQVAYRKDLISNFNVCSNC).

The protein belongs to the AccD/PCCB family. Acetyl-CoA carboxylase is a heterohexamer composed of biotin carboxyl carrier protein (AccB), biotin carboxylase (AccC) and two subunits each of ACCase subunit alpha (AccA) and ACCase subunit beta (AccD). Zn(2+) serves as cofactor.

The protein localises to the cytoplasm. The catalysed reaction is N(6)-carboxybiotinyl-L-lysyl-[protein] + acetyl-CoA = N(6)-biotinyl-L-lysyl-[protein] + malonyl-CoA. Its pathway is lipid metabolism; malonyl-CoA biosynthesis; malonyl-CoA from acetyl-CoA: step 1/1. In terms of biological role, component of the acetyl coenzyme A carboxylase (ACC) complex. Biotin carboxylase (BC) catalyzes the carboxylation of biotin on its carrier protein (BCCP) and then the CO(2) group is transferred by the transcarboxylase to acetyl-CoA to form malonyl-CoA. This chain is Acetyl-coenzyme A carboxylase carboxyl transferase subunit beta, found in Prochlorococcus marinus (strain MIT 9312).